The chain runs to 203 residues: MRGRFITLEGMDGAGKSSHIESIVSVLEGRGLEVVSTREPGGTPLGEKLRELLLHERMHVETETLLMFAARREHIAEVIEPALARGAWVVSDRFTDASFAYQCGGRGVPCEKVEALEAWVHPDLQPDLTLLFDVPVEISVARLAAARTPDKFERESAEFFRRIRNGYLARAEAQPQRFRLIDGNRPMDTVRKEVLDIMREFKA.

10-17 (GMDGAGKS) contributes to the ATP binding site.

Belongs to the thymidylate kinase family.

The catalysed reaction is dTMP + ATP = dTDP + ADP. Functionally, phosphorylation of dTMP to form dTDP in both de novo and salvage pathways of dTTP synthesis. This Methylobacillus flagellatus (strain ATCC 51484 / DSM 6875 / VKM B-1610 / KT) protein is Thymidylate kinase.